We begin with the raw amino-acid sequence, 471 residues long: Variant surface glycoprotein ILTAT 1.21 (471 aa).

The first 21 residues, 1–21 (MLRALLPSTTLALILAGGGHA), serve as a signal peptide directing secretion. N-linked (GlcNAc...) asparagine glycans are attached at residues Asn64 and Asn405. Positions 406–449 (ATADECPETRCEYDSEKNECRPKKGTETTATGPGERTTPADGKA) are disordered. Basic and acidic residues predominate over residues 412–431 (PETRCEYDSEKNECRPKKGT). A glycan (N-linked (GlcNAc...) asparagine) is linked at Asn450. The GPI-anchor amidated serine moiety is linked to residue Ser454. Residues 455–471 (DSLLIKTSPLWLAFLLF) constitute a propeptide, removed in mature form.

Its subcellular location is the cell membrane. In terms of biological role, VSG forms a coat on the surface of the parasite. The trypanosome evades the immune response of the host by expressing a series of antigenically distinct VSGs from an estimated 1000 VSG genes. In Trypanosoma brucei brucei, this protein is Variant surface glycoprotein ILTAT 1.21.